We begin with the raw amino-acid sequence, 168 residues long: Transcription antitermination protein NusB (168 aa).

The protein belongs to the NusB family.

Its function is as follows. Involved in transcription antitermination. Required for transcription of ribosomal RNA (rRNA) genes. Binds specifically to the boxA antiterminator sequence of the ribosomal RNA (rrn) operons. This Brucella anthropi (strain ATCC 49188 / DSM 6882 / CCUG 24695 / JCM 21032 / LMG 3331 / NBRC 15819 / NCTC 12168 / Alc 37) (Ochrobactrum anthropi) protein is Transcription antitermination protein NusB.